The sequence spans 874 residues: Oxysterol-binding protein-related protein 5 (874 aa).

Residues 1 to 71 (MKEEAFLRRR…PQTPGSATKV (71 aa)) form a disordered region. Phosphoserine is present on serine 12. Residues 93-123 (VSKKDALKAQKENYRQEKKRATKQLFSALTD) adopt a coiled-coil conformation. The PH domain occupies 126 to 243 (VVIMADSLKI…WLDALELALR (118 aa)). 2 disordered regions span residues 255 to 277 (QGRD…GLPT) and 299 to 338 (FSDK…GPWR). Polar residues predominate over residues 261-277 (QGSSPDASPSSLYGLPT). Residues 299–308 (FSDKSERENA) show a composition bias toward basic and acidic residues. A 1,2-diacyl-sn-glycero-3-phospho-(1D-myo-inositol 4-phosphate) contacts are provided by residues 383–388 (LSRVVL), 445–448 (KPYN), and 477–478 (HH). A 1,2-diacyl-sn-glycero-3-phospho-L-serine is bound by residues 383–388 (LSRVVL) and asparagine 448. Residue serine 503 participates in a 1,2-diacyl-sn-glycero-3-phospho-L-serine binding. Residues 660–684 (GDQHKATQEKSVLEEAQRQRAREHQ) are compositionally biased toward basic and acidic residues. 2 disordered regions span residues 660-685 (GDQH…EHQQ) and 739-798 (GQTT…GGES). A 1,2-diacyl-sn-glycero-3-phospho-(1D-myo-inositol 4-phosphate) is bound by residues lysine 669, glutamate 673, and arginine 677. Phosphoserine occurs at positions 746 and 749. Residues 754-764 (PSSDRRLRKAS) are compositionally biased toward basic and acidic residues. The segment covering 765–782 (DQPSGHSQVTESSGSTPE) has biased composition (polar residues). A helical membrane pass occupies residues 855 to 873 (SWFLLCIFLTCQLFINYIL).

The protein belongs to the OSBP family.

The protein localises to the endoplasmic reticulum membrane. Its function is as follows. Lipid transporter involved in lipid countertransport between the endoplasmic reticulum and the plasma membrane: specifically exchanges phosphatidylserine with phosphatidylinositol 4-phosphate (PI4P), delivering phosphatidylserine to the plasma membrane in exchange for PI4P, which is degraded by the SAC1/SACM1L phosphatase in the endoplasmic reticulum. Binds phosphatidylserine and PI4P in a mutually exclusive manner. May cooperate with NPC1 to mediate the exit of cholesterol from endosomes/lysosomes. Binds 25-hydroxycholesterol and cholesterol. The sequence is that of Oxysterol-binding protein-related protein 5 (Osbpl5) from Mus musculus (Mouse).